Here is a 141-residue protein sequence, read N- to C-terminus: Large ribosomal subunit protein uL22 (141 aa).

The interval 110–141 is disordered; sequence EEKKTVAKKTTTTKAPAKKTTSTKKATVKKES. Residues 117-134 show a composition bias toward low complexity; that stretch reads KKTTTTKAPAKKTTSTKK.

This sequence belongs to the universal ribosomal protein uL22 family. As to quaternary structure, part of the 50S ribosomal subunit.

This protein binds specifically to 23S rRNA; its binding is stimulated by other ribosomal proteins, e.g. L4, L17, and L20. It is important during the early stages of 50S assembly. It makes multiple contacts with different domains of the 23S rRNA in the assembled 50S subunit and ribosome. Its function is as follows. The globular domain of the protein is located near the polypeptide exit tunnel on the outside of the subunit, while an extended beta-hairpin is found that lines the wall of the exit tunnel in the center of the 70S ribosome. This is Large ribosomal subunit protein uL22 from Campylobacter jejuni (strain RM1221).